The following is a 209-amino-acid chain: Large ribosomal subunit protein uL3 (209 aa).

Glutamine 150 bears the N5-methylglutamine mark.

This sequence belongs to the universal ribosomal protein uL3 family. In terms of assembly, part of the 50S ribosomal subunit. Forms a cluster with proteins L14 and L19. Post-translationally, methylated by PrmB.

One of the primary rRNA binding proteins, it binds directly near the 3'-end of the 23S rRNA, where it nucleates assembly of the 50S subunit. The protein is Large ribosomal subunit protein uL3 of Proteus mirabilis (strain HI4320).